Reading from the N-terminus, the 533-residue chain is Retinoic acid receptor RXR-beta (533 aa).

Residues 1 to 24 (MSWAARPPFLPQRHAAGQCGPVGV) form a disordered region. Residues 1–204 (MSWAARPPFL…PGGPGAGKRL (204 aa)) form a modulating region. R25 bears the Omega-N-methylarginine mark. Residues 37–183 (RRRRPWLDPA…GPPEDVKPPV (147 aa)) are disordered. Low complexity predominate over residues 46-61 (AAAAAAAAAAGEQQTP). Basic and acidic residues predominate over residues 67 to 82 (EAGRDGMGDSGRDSRS). Over residues 83–94 (PDSSSPNPLSQG) the composition is skewed to low complexity. 2 stretches are compositionally biased toward pro residues: residues 95–109 (APPP…PPSS) and 118–129 (APPPPPMPPPQL). The span at 130–143 (GSPFPVISSSMGSP) shows a compositional bias: low complexity. Residues 144–153 (GLPPPAPPGF) are compositionally biased toward pro residues. 2 consecutive NR C4-type zinc fingers follow at residues 205 to 225 (CAIC…CEGC) and 241 to 265 (CRDN…YQKC). Positions 205–270 (CAICGDRSSG…RYQKCLATGM (66 aa)) form a DNA-binding region, nuclear receptor. The hinge stretch occupies residues 271 to 295 (KREAVQEERQRGKDKDGDGEGAGGA). The segment covering 276 to 288 (QEERQRGKDKDGD) has biased composition (basic and acidic residues). 2 disordered regions span residues 276-299 (QEER…PEEM) and 313-336 (QKSD…NDPV). The 234-residue stretch at 296–529 (PEEMPVDRIL…TFLMEMLEAP (234 aa)) folds into the NR LBD domain. Residues 320 to 329 (EGPGGTGGSG) show a composition bias toward gly residues.

It belongs to the nuclear hormone receptor family. NR2 subfamily. As to quaternary structure, homodimer (in vitro). Heterodimer with other retinoic acid receptor family members. Binds DNA preferentially as a RAR/RXR heterodimer. Interacts with NR1H3. Interacts with AKAP13.

It localises to the nucleus. The protein resides in the cytoplasm. Functionally, receptor for retinoic acid. Retinoic acid receptors bind as heterodimers to their target response elements in response to their ligands, all-trans or 9-cis retinoic acid, and regulate gene expression in various biological processes. The RAR/RXR heterodimers bind to the retinoic acid response elements (RARE). This is Retinoic acid receptor RXR-beta (RXRB) from Canis lupus familiaris (Dog).